Reading from the N-terminus, the 487-residue chain is UDP-N-acetylmuramoyl-L-alanyl-D-glutamate--2,6-diaminopimelate ligase (487 aa).

UDP-N-acetyl-alpha-D-muramoyl-L-alanyl-D-glutamate-binding residues include Leu-23 and Ser-25. Position 108-114 (108-114 (GTNGKTS)) interacts with ATP. UDP-N-acetyl-alpha-D-muramoyl-L-alanyl-D-glutamate contacts are provided by residues 150–151 (TT), Ser-177, Gln-183, and Arg-185. Position 217 is an N6-carboxylysine (Lys-217). Meso-2,6-diaminopimelate contacts are provided by residues Arg-378, 402 to 405 (DNPR), Gly-453, and Glu-457. A Meso-diaminopimelate recognition motif motif is present at residues 402 to 405 (DNPR).

It belongs to the MurCDEF family. MurE subfamily. It depends on Mg(2+) as a cofactor. Post-translationally, carboxylation is probably crucial for Mg(2+) binding and, consequently, for the gamma-phosphate positioning of ATP.

It is found in the cytoplasm. It carries out the reaction UDP-N-acetyl-alpha-D-muramoyl-L-alanyl-D-glutamate + meso-2,6-diaminopimelate + ATP = UDP-N-acetyl-alpha-D-muramoyl-L-alanyl-gamma-D-glutamyl-meso-2,6-diaminopimelate + ADP + phosphate + H(+). It participates in cell wall biogenesis; peptidoglycan biosynthesis. Its function is as follows. Catalyzes the addition of meso-diaminopimelic acid to the nucleotide precursor UDP-N-acetylmuramoyl-L-alanyl-D-glutamate (UMAG) in the biosynthesis of bacterial cell-wall peptidoglycan. This is UDP-N-acetylmuramoyl-L-alanyl-D-glutamate--2,6-diaminopimelate ligase from Pseudomonas syringae pv. tomato (strain ATCC BAA-871 / DC3000).